The primary structure comprises 441 residues: POC1 centriolar protein homolog A (441 aa).

WD repeat units follow at residues 16-55 (GHRD…RAYR), 58-97 (GHKD…ESTA), 100-139 (AHTG…FLFS), 142-181 (QHIN…CIQS), 184-223 (EHGG…LIQH), 226-265 (VHSG…LLYT), and 268-307 (GHQG…GSYP). The segment at 347 to 376 (DLEPHITEMSVKDRSSPLSYTSRSVDQHHP) is disordered. The segment covering 348–361 (LEPHITEMSVKDRS) has biased composition (basic and acidic residues). Residues 400–427 (LTRTVGILEQRLSLTEDKLKECIEQQQA) adopt a coiled-coil conformation.

It belongs to the WD repeat POC1 family. In terms of assembly, interacts with pat.

It is found in the cytoplasm. The protein resides in the cytoskeleton. May play an important role in centriole assembly and/or stability and ciliogenesis. The sequence is that of POC1 centriolar protein homolog A (poc1a) from Xenopus laevis (African clawed frog).